Consider the following 814-residue polypeptide: Putative serine/threonine-protein kinase-like protein CCR3 (814 aa).

The N-terminal stretch at 1-30 is a signal peptide; that stretch reads MKRFINSTVTFSVTVTIAVIIFFLLSPVTS. N-linked (GlcNAc...) asparagine glycans are attached at residues Asn6, Asn68, Asn136, Asn215, Asn226, Asn251, Asn260, Asn275, Asn299, and Asn309. Residues 31 to 393 lie on the Extracellular side of the membrane; that stretch reads LGSGSTYAVV…SSPPSKALTR (363 aa). The segment covering 366-381 has biased composition (pro residues); sequence SQFPLPPPPPPPPPSP. Residues 366 to 388 form a disordered region; it reads SQFPLPPPPPPPPPSPSTSSPPS. The helical transmembrane segment at 394–414 threads the bilayer; sequence GLLAFAIVGSVGAFAGICSVV. Residues 415 to 814 are Cytoplasmic-facing; that stretch reads YCLWTGVCLG…SSGICSIVSD (400 aa). The tract at residues 433–478 is disordered; the sequence is QPTITRGGSNSRSNSSNSRSLSIRRQGSRMLSMRRQRSGTSSMKHA. Low complexity predominate over residues 441-457; the sequence is SNSRSNSSNSRSLSIRR. One can recognise a Protein kinase domain in the interval 496–794; it reads FSLENKIGSG…DIVGNLERAL (299 aa). ATP-binding positions include 502 to 510 and Lys524; that span reads IGSGSFGVV. The Proton acceptor role is filled by Asp631.

This sequence belongs to the protein kinase superfamily. Ser/Thr protein kinase family. Homodimer. In terms of tissue distribution, expressed in roots, leaves, shoot apical meristems (SAM), and floral buds.

The protein resides in the membrane. The catalysed reaction is L-seryl-[protein] + ATP = O-phospho-L-seryl-[protein] + ADP + H(+). It carries out the reaction L-threonyl-[protein] + ATP = O-phospho-L-threonyl-[protein] + ADP + H(+). In terms of biological role, serine/threonine-protein kinase. The protein is Putative serine/threonine-protein kinase-like protein CCR3 (CCR3) of Arabidopsis thaliana (Mouse-ear cress).